The sequence spans 823 residues: NAD-dependent histone deacetylase sirtuin-1 (823 aa).

The segment covering Leu41–Ala67 has biased composition (low complexity). Positions Leu41–Glu146 are disordered. Basic and acidic residues predominate over residues Gly72–Thr95. A compositionally biased stretch (acidic residues) spans Glu104–Ser137. The 296-residue stretch at Lys204–Glu499 folds into the Deacetylase sirtuin-type domain. NAD(+) contacts are provided by residues Gly229–Tyr248 and Gln313–Asp316. Residue His331 is the Proton acceptor of the active site. Residues Cys339, Cys342, Cys363, and Cys366 each contribute to the Zn(2+) site. NAD(+)-binding positions include Gly427 to Ser429, Asn452 to Glu454, and Ser469. Residues Ser618 and Ser621 each carry the phosphoserine modification. Positions Asp698–Glu707 are enriched in acidic residues. Disordered regions lie at residues Asp698–Gly722 and Ile777–Val823. Residues Pro798–Glu813 are compositionally biased toward basic and acidic residues. Residues Ser814–Val823 are compositionally biased toward pro residues.

The protein belongs to the sirtuin family. Class I subfamily. As to quaternary structure, interacts with the transcriptional repressors hairy (hry) and deadpan (dpn); via basic domains. Associates with the Esc/E(z) histone methyltransferase complex. Interacts directly with E(z) and HDAC1/Rpd3. Zn(2+) is required as a cofactor.

The protein resides in the cytoplasm. Its subcellular location is the nucleus. The protein localises to the chromosome. The enzyme catalyses N(6)-acetyl-L-lysyl-[protein] + NAD(+) + H2O = 2''-O-acetyl-ADP-D-ribose + nicotinamide + L-lysyl-[protein]. Functionally, NAD-dependent histone deacetylase involved in heterochromatic silencing. Mildly suppresses the heterochromatin-mediated silencing phenomenon known as position-effect variegation (PEV). Required for epigenetic silencing of the polycomb group proteins. Has histone H4 deacetylase activity in vitro. Required maternally for establishing proper segmentation of the embryo. Involved in sex determination. May be involved in the regulation of life span. This Drosophila melanogaster (Fruit fly) protein is NAD-dependent histone deacetylase sirtuin-1.